We begin with the raw amino-acid sequence, 1613 residues long: NAD-specific glutamate dehydrogenase (1613 aa).

Lysine 849 is an active-site residue.

This sequence belongs to the Glu/Leu/Phe/Val dehydrogenases family.

The catalysed reaction is L-glutamate + NAD(+) + H2O = 2-oxoglutarate + NH4(+) + NADH + H(+). Involved in arginine catabolism by converting L-glutamate, into 2-oxoglutarate, which is then channeled into the tricarboxylic acid cycle. This Halomonas elongata (strain ATCC 33173 / DSM 2581 / NBRC 15536 / NCIMB 2198 / 1H9) protein is NAD-specific glutamate dehydrogenase.